A 522-amino-acid chain; its full sequence is U4/U6 small nuclear ribonucleoprotein Prp4 (522 aa).

A compositionally biased stretch (polar residues) spans 1–13 (MASSRASSTQATK). Positions 1–20 (MASSRASSTQATKTKAPDDL) are disordered. Lys27 carries the post-translational modification N6-acetyllysine. WD repeat units follow at residues 229-268 (GDDR…LLHT), 271-318 (GHNT…PVAD), 321-360 (GHTV…EILH), 363-402 (GHSM…CIMF), 405-444 (GHLK…CVYT), 447-487 (AHQN…PLKT), and 490-521 (GHEG…LWMA).

Component of the precatalytic spliceosome (spliceosome B complex). Component of the U4/U6-U5 tri-snRNP complex, a building block of the precatalytic spliceosome (spliceosome B complex). The U4/U6-U5 tri-snRNP complex is composed of the U4, U6 and U5 snRNAs and at least PRPF3, PRPF4, PRPF6, PRPF8, PRPF31, SNRNP200, TXNL4A, SNRNP40, SNRPB, SNRPD1, SNRPD2, SNRPD3, SNRPE, SNRPF, SNRPG, DDX23, CD2BP2, PPIH, SNU13, EFTUD2, SART1 and USP39, plus LSM2, LSM3, LSM4, LSM5, LSM6, LSM7 and LSM8. Interacts directly with PRPF18, PPIH and PRPF3. Part of a heteromeric complex containing PPIH, PRPF3 and PRPF4 that is stable in the absence of RNA. Interacts with ERCC6.

Its subcellular location is the nucleus. It localises to the nucleus speckle. Plays a role in pre-mRNA splicing as component of the U4/U6-U5 tri-snRNP complex that is involved in spliceosome assembly, and as component of the precatalytic spliceosome (spliceosome B complex). This is U4/U6 small nuclear ribonucleoprotein Prp4 (PRPF4) from Homo sapiens (Human).